A 413-amino-acid polypeptide reads, in one-letter code: PAB1-binding protein 2 (413 aa).

Residues M1 to T23 show a composition bias toward low complexity. The tract at residues M1–Q36 is disordered. KH domains are found at residues D66–I130, E148–I213, and F330–I394.

As to quaternary structure, interacts with PAB1.

Its subcellular location is the nucleus. In Saccharomyces cerevisiae (strain ATCC 204508 / S288c) (Baker's yeast), this protein is PAB1-binding protein 2 (PBP2).